The primary structure comprises 202 residues: Riboflavin synthase (202 aa).

2 Lumazine-binding repeats span residues 1–101 and 102–198; these read MFTG…MGGH and LVFG…ARLA. 2,4-dihydroxypteridine is bound by residues 4–6, 47–49, 66–68, 105–107, Lys-140, 149–151, and 163–168; these read GII, CLT, EAW, GHV, SLT, and LLIRHS.

As to quaternary structure, homotrimer.

It carries out the reaction 2 6,7-dimethyl-8-(1-D-ribityl)lumazine + H(+) = 5-amino-6-(D-ribitylamino)uracil + riboflavin. It functions in the pathway cofactor biosynthesis; riboflavin biosynthesis; riboflavin from 2-hydroxy-3-oxobutyl phosphate and 5-amino-6-(D-ribitylamino)uracil: step 2/2. Its activity is regulated as follows. Is inhibited by riboflavin. Product inhibition may be the major mechanism by which RS regulates its enzymatic activity in vivo. Catalyzes the dismutation of two molecules of 6,7-dimethyl-8-ribityllumazine, resulting in the formation of riboflavin and 5-amino-6-(D-ribitylamino)uracil. In Brucella abortus (strain 2308), this protein is Riboflavin synthase.